A 434-amino-acid polypeptide reads, in one-letter code: MVSSLFINPFSEDAREIVRKYGSLDTIDDTRDELLEIGRRTRGQNLADNSLLPASIAELAVKRLEWYLRRQRKDFNHRDYAYLMNPEIEEYDVLAFYILAQAAGAGFMKASREARLVVESAGAMVEDRLNVFGGEREEIMAEVLYELGSEGLRWTELADLLGSGKLKLTDLILKEGRVIIDRDEFITSFQDSIRDRSPDRLYDILVGLEVRETMISRMIMQRTEEYIGMVREMSSTVEVHPLILETAERIRETVEEIMSFTGGPVKSARPGKLVQEAFPPCIRGTLDGVRSGNRNDAIVLLLTSFISYARLYPSVFRDRTPMKVSDLDPDLRITLGEILPVIYDAADRCEPPLFEDDPQEKLNITAKLGFGVHDMPELENEGESKWYTPMSCEKIKIHLPDLCRPDKLCSSISNPLTYYNRKRWKLRSSGEKEE.

Residues Cys-281, Cys-392, Cys-403, and Cys-409 each coordinate [4Fe-4S] cluster.

This sequence belongs to the eukaryotic-type primase large subunit family. In terms of assembly, heterodimer of a small subunit (PriS) and a large subunit (PriL). The cofactor is [4Fe-4S] cluster.

In terms of biological role, regulatory subunit of DNA primase, an RNA polymerase that catalyzes the synthesis of short RNA molecules used as primers for DNA polymerase during DNA replication. Stabilizes and modulates the activity of the small subunit, increasing the rate of DNA synthesis, and conferring RNA synthesis capability. The DNA polymerase activity may enable DNA primase to also catalyze primer extension after primer synthesis. May also play a role in DNA repair. This Methanothermobacter thermautotrophicus (strain ATCC 29096 / DSM 1053 / JCM 10044 / NBRC 100330 / Delta H) (Methanobacterium thermoautotrophicum) protein is DNA primase large subunit PriL.